The sequence spans 427 residues: Trigger factor (427 aa).

The PPIase FKBP-type domain maps to 163–248; that stretch reads GDIVVIDFAG…LKEIKRKELA (86 aa).

This sequence belongs to the FKBP-type PPIase family. Tig subfamily.

The protein resides in the cytoplasm. It carries out the reaction [protein]-peptidylproline (omega=180) = [protein]-peptidylproline (omega=0). Functionally, involved in protein export. Acts as a chaperone by maintaining the newly synthesized protein in an open conformation. Functions as a peptidyl-prolyl cis-trans isomerase. The chain is Trigger factor from Carboxydothermus hydrogenoformans (strain ATCC BAA-161 / DSM 6008 / Z-2901).